The following is a 757-amino-acid chain: Mitofusin-2 (757 aa).

The Cytoplasmic segment spans residues 1-604; it reads MSLLFSRCNS…TQEEFMVSMV (604 aa). Positions 30–94 are part of a helix bundle domain, formed by helices from N-terminal and C-terminal regions; the sequence is KHFVTAKKKI…VRGISEVLAR (65 aa). Residues 93–342 enclose the Dynamin-type G domain; that stretch reads ARRHMKVAFF…VRMFEFQNFE (250 aa). Positions 103–110 are G1 motif; sequence GRTSNGKS. 106 to 111 contributes to the GTP binding site; sequence SNGKST. Thr-111 is subject to Phosphothreonine; by PINK1. A G2 motif region spans residues 129 to 130; that stretch reads TT. The interval 199–202 is G3 motif; that stretch reads DSPG. 258–261 lines the GTP pocket; sequence NRWD. Positions 258-261 are G4 motif; that stretch reads NRWD. Residue Glu-288 is a region of interest, G5 motif. 2 residues coordinate GTP: Ser-305 and Lys-307. The tract at residues 359–385 is part of a helix bundle domain, formed by helices from N-terminal and C-terminal regions; it reads EQHTVRAKQIAEAVRLIMDSLHMAARE. Residues 391–434 adopt a coiled-coil conformation; sequence EEMREERQDRLKFIDKQLELLAQDYKLRIKQITEEVERQVSTAM. Position 442 is a phosphoserine; by PINK1 (Ser-442). A helical membrane pass occupies residues 605–625; the sequence is TGLASLTSRTSMGILVVGGVV. Trp-626 is a topological domain (mitochondrial intermembrane). A helical transmembrane segment spans residues 627-647; that stretch reads KAVGWRLIALSFGLYGLLYVY. At 648 to 757 the chain is on the cytoplasmic side; that stretch reads ERLTWTTKAK…FTHQYLQPSR (110 aa). The stretch at 695–738 forms a coiled coil; it reads TFAHLCQQVDVTRENLEQEIAAMNKKIEVLDSLQSKAKLLRNKA. A part of a helix bundle domain, formed by helices from N-terminal and C-terminal regions region spans residues 722 to 753; that stretch reads EVLDSLQSKAKLLRNKAGWLDSELNMFTHQYL.

It belongs to the TRAFAC class dynamin-like GTPase superfamily. Dynamin/Fzo/YdjA family. Mitofusin subfamily. In terms of assembly, forms homomultimers and heteromultimers with MFN1. Oligomerization is essential for mitochondrion fusion. Interacts with VAT1. Interacts with STOML2; may form heterooligomers. Interacts (phosphorylated) with PRKN. Interacts with EIF2AK3. Interacts with THG1L; THG1L probably functions as a guanyl-nucleotide exchange factor/GEF, activating MFN2. Post-translationally, phosphorylated by PINK1. In terms of processing, ubiquitinated by non-degradative ubiquitin by PRKN, promoting mitochondrial fusion; deubiquitination by USP30 inhibits mitochondrial fusion. Ubiquitinated by HUWE1 when dietary stearate (C18:0) levels are low; ubiquitination inhibits mitochondrial fusion. Ubiquitous; expressed at low level. Highly expressed in heart and kidney.

Its subcellular location is the mitochondrion outer membrane. The enzyme catalyses GTP + H2O = GDP + phosphate + H(+). Functionally, mitochondrial outer membrane GTPase that mediates mitochondrial clustering and fusion. Mitochondria are highly dynamic organelles, and their morphology is determined by the equilibrium between mitochondrial fusion and fission events. Overexpression induces the formation of mitochondrial networks. Membrane clustering requires GTPase activity and may involve a major rearrangement of the coiled coil domains. Plays a central role in mitochondrial metabolism and may be associated with obesity and/or apoptosis processes. Plays an important role in the regulation of vascular smooth muscle cell proliferation. Involved in the clearance of damaged mitochondria via selective autophagy (mitophagy). Is required for PRKN recruitment to dysfunctional mitochondria. Involved in the control of unfolded protein response (UPR) upon ER stress including activation of apoptosis and autophagy during ER stress. Acts as an upstream regulator of EIF2AK3 and suppresses EIF2AK3 activation under basal conditions. The polypeptide is Mitofusin-2 (Homo sapiens (Human)).